The following is a 149-amino-acid chain: uncharacterized protein (149 aa).

This is an uncharacterized protein from Escherichia coli (strain K12).